We begin with the raw amino-acid sequence, 328 residues long: DNA-directed RNA polymerase subunit alpha (328 aa).

An alpha N-terminal domain (alpha-NTD) region spans residues 1-231 (MIYQMQMPAK…EHVTFFANFS (231 aa)). The alpha C-terminal domain (alpha-CTD) stretch occupies residues 247 to 328 (DEFETMRRLL…MDITRYQMKG (82 aa)).

It belongs to the RNA polymerase alpha chain family. Homodimer. The RNAP catalytic core consists of 2 alpha, 1 beta, 1 beta' and 1 omega subunit. When a sigma factor is associated with the core the holoenzyme is formed, which can initiate transcription.

It catalyses the reaction RNA(n) + a ribonucleoside 5'-triphosphate = RNA(n+1) + diphosphate. Its function is as follows. DNA-dependent RNA polymerase catalyzes the transcription of DNA into RNA using the four ribonucleoside triphosphates as substrates. The sequence is that of DNA-directed RNA polymerase subunit alpha from Chlorobium luteolum (strain DSM 273 / BCRC 81028 / 2530) (Pelodictyon luteolum).